The sequence spans 820 residues: MQNWALVIGINRYWRADACLKGAVKDALKMREWLTSIDGGAVPSRNLILLLSPHDDPESCGGASALPATQDMIIQAIEQIFRKSGEEGDRFFFYYSGHGLTARMSFSNESGIIPNDFSDTLTNKALSLRSIFERFQSTRFREQFFFIDACRNIPWEGEREFLISQYPLPKPPKPPVFPQFIMYATSPGVKAVEIHEAGNERGAFTDALLAGLRGTGNAKLWHEEDREYMVRWDNLFRFVEEEVIRRRLSVSENRVPPLIQEPRQFGERGSCNPTLASLPAEVFPEVSLDVHLDPMTVASQTEVIVGDLGGVLRREFPVTALPVHFDLQPRTYSIRTSTPDFRSEKRYYQVDLYGPAEVSIKMVPGTGYSTPVSPSSGVSKSVDGNTATASVLMRSHDPLAYLELLDNSGTTIETGIGQIYRPRVKPGFYRLRLRTPEGIPHERLVELSSGESADITLDAPPQTDSGLFTHIAFTSHMYQGEPNIIQPSEAIGPAQSMHLSTILALAGGAVNEDSSYGGKLRGLGITSFRNIAGEEATSGMQILFGNEVTAPAFTDNYLSAVRLRCWGIDRGIPAEYRQPLHVADITGLAQATWEMEPGSYLLSIELPDRMPVVFPVAALSNRLSLLVVTQDATGVVNFFRYLPSLKDELPGDPRYEAARFPVLRRLEYIQRSCMVGRFEQAYQNARELLNAKWIDPMAGLLGSYLLMRLGKSDELCIPARNLSECFGELSDSHVIAAEYEAGIGNEEKAADAFRRALDNGLPIMSDCLTKLIYGMERYGIEHPRAALAKSYYSHGIKGLLWSACPRKACEAAPGETGADA.

This sequence belongs to the peptidase C25 family.

Its function is as follows. Probably a dedicated protease for substrate gasdermin bGSDM; cleaves the bGSDM precursor, releasing the pore-forming moiety, which integrates into the membrane and triggers cell death. Involved in defense against bacteriophages. Expression of bacterial gasdermin (bGSDM) and this neighboring protease is toxic in E.coli. The protein is Probable protease Ga0182885_104520 of Desulfuromonadales bacterium.